The chain runs to 675 residues: MHHVNKYFNQTMVIEALKMSFYKLNLKQLIKNPIMFVVEVGMILTLILICFPDIFGTSYLSRGYLITIFIILLITILFANFSEAFAEGRGKAQADSLRQAQSNLTARLIEENGAYRIVNATELKAGQNIRVENGETIPADGVVINGLATVDESAITGESAPVIKESGGDFDGVIGGTLVTSDWLEIRVESEAGTSFLDKMIALVEGAERNKTPNEIALFTLLTTLTIIFLVVIVTLYPIASYLHLILPIAMLIALTVCLIPTTIGGLLSAIGIAGMDRVTQFNVLAKSGRAVEVCGDVDVMILDKTGTITYGNRIASEFLPVNQQMLEKLIVAAYMSSIYDDTPEGKSIVRLAKQMYINELPKDIDGTYKPFTAETRMSGIITNEISVFKGAPNSMINLVKQQQGNIPLNIESLCMDVSSKGGTPLIVIENNVMLGVIYLKDVIKDGLVERFTELRKMGIETVMCTGDNALTAATIAKEAGVDRFVAECKPEDKIKVIKDEQAKGHIVAMTGDGTNDAPALAQANIGLAMNSGTISAKEAANLIDLDSNPTKLIEVVKIGKQLLMTRGALTTFSLANDVAKYFAILPALMMSTIPEMTSLNIMHLSSPKSAIISALIFNALIIVALIPIAMKGVKVKGYSIDRIFINNMLIYGLGGLIVPFLGIKLIDMIVQFFV.

4 helical membrane-spanning segments follow: residues 34–54 (IMFV…FPDI), 65–85 (LITI…SEAF), 216–236 (IALF…IVTL), and 245–265 (LILP…TTIG). The active-site 4-aspartylphosphate intermediate is the D304. ATP is bound by residues D341, E345, 372-379 (FTAETRMS), and K390. Mg(2+)-binding residues include D513 and D517. 3 consecutive transmembrane segments (helical) span residues 569-591 (ALTT…ALMM), 611-631 (AIIS…PIAM), and 644-664 (IFIN…FLGI).

The protein belongs to the cation transport ATPase (P-type) (TC 3.A.3) family. Type IA subfamily. The system is composed of three essential subunits: KdpA, KdpB and KdpC.

It localises to the cell membrane. It catalyses the reaction K(+)(out) + ATP + H2O = K(+)(in) + ADP + phosphate + H(+). Its function is as follows. Part of the high-affinity ATP-driven potassium transport (or Kdp) system, which catalyzes the hydrolysis of ATP coupled with the electrogenic transport of potassium into the cytoplasm. This subunit is responsible for energy coupling to the transport system and for the release of the potassium ions to the cytoplasm. The protein is Potassium-transporting ATPase ATP-binding subunit of Staphylococcus aureus (strain Newman).